Here is a 248-residue protein sequence, read N- to C-terminus: Glutamine-binding periplasmic protein (248 aa).

An N-terminal signal peptide occupies residues 1 to 22; it reads MKSVLKVSLAALTLAFAVSSHA.

It belongs to the bacterial solute-binding protein 3 family.

The protein resides in the periplasm. In terms of biological role, involved in a glutamine-transport system GlnHPQ. In Escherichia coli O157:H7, this protein is Glutamine-binding periplasmic protein (glnH).